A 428-amino-acid chain; its full sequence is Phosphoribosylamine--glycine ligase (428 aa).

Residues 109–316 (KDFLARHNIP…LVELCLAGTQ (208 aa)) form the ATP-grasp domain. 135-196 (VRQKGAPIVI…EEFLDGEEAS (62 aa)) is an ATP binding site. Positions 286 and 288 each coordinate Mg(2+).

Belongs to the GARS family. Mg(2+) serves as cofactor. It depends on Mn(2+) as a cofactor.

It carries out the reaction 5-phospho-beta-D-ribosylamine + glycine + ATP = N(1)-(5-phospho-beta-D-ribosyl)glycinamide + ADP + phosphate + H(+). It functions in the pathway purine metabolism; IMP biosynthesis via de novo pathway; N(1)-(5-phospho-D-ribosyl)glycinamide from 5-phospho-alpha-D-ribose 1-diphosphate: step 2/2. The chain is Phosphoribosylamine--glycine ligase from Yersinia pestis.